We begin with the raw amino-acid sequence, 475 residues long: ATP synthase subunit beta, chloroplastic (475 aa).

155-162 is a binding site for ATP; sequence GGAGVGKT.

It belongs to the ATPase alpha/beta chains family. In terms of assembly, F-type ATPases have 2 components, CF(1) - the catalytic core - and CF(0) - the membrane proton channel. CF(1) has five subunits: alpha(3), beta(3), gamma(1), delta(1), epsilon(1). CF(0) has four main subunits: a(1), b(1), b'(1) and c(9-12).

The protein localises to the plastid. It localises to the chloroplast thylakoid membrane. The enzyme catalyses ATP + H2O + 4 H(+)(in) = ADP + phosphate + 5 H(+)(out). Its function is as follows. Produces ATP from ADP in the presence of a proton gradient across the membrane. The catalytic sites are hosted primarily by the beta subunits. The polypeptide is ATP synthase subunit beta, chloroplastic (Guillardia theta (Cryptophyte)).